Reading from the N-terminus, the 384-residue chain is uncharacterized protein (384 aa).

The segment at 1–116 (MTEMPKKKFS…FPAAPPPMDS (116 aa)) is disordered. Basic and acidic residues-rich tracts occupy residues 14 to 70 (ARGD…RAGD) and 78 to 95 (RFKD…DRPR). Positions 318, 338, and 347 each coordinate S-adenosyl-L-methionine.

Belongs to the class IV-like SAM-binding methyltransferase superfamily. RNA methyltransferase TrmH family.

This is an uncharacterized protein from Synechocystis sp. (strain ATCC 27184 / PCC 6803 / Kazusa).